The sequence spans 272 residues: Shikimate dehydrogenase (NADP(+)) (272 aa).

Residues 14–16 and threonine 61 contribute to the shikimate site; that span reads SKS. Residue lysine 65 is the Proton acceptor of the active site. Glutamate 77 is an NADP(+) binding site. Residues asparagine 86 and aspartate 102 each contribute to the shikimate site. Residues 126–130, 149–154, and methionine 213 each bind NADP(+); these read GAGGA and NRTVSR. Tyrosine 215 serves as a coordination point for shikimate. Glycine 237 contributes to the NADP(+) binding site.

Belongs to the shikimate dehydrogenase family. Homodimer.

The enzyme catalyses shikimate + NADP(+) = 3-dehydroshikimate + NADPH + H(+). It participates in metabolic intermediate biosynthesis; chorismate biosynthesis; chorismate from D-erythrose 4-phosphate and phosphoenolpyruvate: step 4/7. Functionally, involved in the biosynthesis of the chorismate, which leads to the biosynthesis of aromatic amino acids. Catalyzes the reversible NADPH linked reduction of 3-dehydroshikimate (DHSA) to yield shikimate (SA). This is Shikimate dehydrogenase (NADP(+)) from Shigella sonnei (strain Ss046).